Here is a 356-residue protein sequence, read N- to C-terminus: Vesicular integral-membrane protein VIP36 (356 aa).

The N-terminal stretch at Met-1–Ala-44 is a signal peptide. Over Asp-45–Arg-322 the chain is Lumenal. One can recognise an L-type lectin-like domain in the interval Glu-52 to Leu-276. A carbohydrate contacts are provided by Ser-96 and Asp-131. Ca(2+) contacts are provided by Asp-162, Tyr-164, and Asn-166. Tyr-164–Asn-166 provides a ligand contact to a carbohydrate. N-linked (GlcNAc...) asparagine glycosylation is present at Asn-183. His-190 is a binding site for a carbohydrate. Asp-193 is a Ca(2+) binding site. A disulfide bridge links Cys-202 with Cys-239. Residue Gly-260–Leu-262 coordinates a carbohydrate. The chain crosses the membrane as a helical span at residues Val-323–Phe-345. Residues Gln-346–Tyr-356 are Cytoplasmic-facing.

It depends on Ca(2+) as a cofactor. In terms of tissue distribution, ubiquitous.

The protein resides in the endoplasmic reticulum-Golgi intermediate compartment membrane. It is found in the golgi apparatus membrane. Its subcellular location is the endoplasmic reticulum membrane. Its function is as follows. Plays a role as an intracellular lectin in the early secretory pathway. Interacts with N-acetyl-D-galactosamine and high-mannose type glycans and may also bind to O-linked glycans. Involved in the transport and sorting of glycoproteins carrying high mannose-type glycans. This chain is Vesicular integral-membrane protein VIP36 (LMAN2), found in Homo sapiens (Human).